The sequence spans 155 residues: Pathogenesis-related protein B (155 aa).

Belongs to the BetVI family.

The protein is Pathogenesis-related protein B (PCPR1-3) of Petroselinum crispum (Parsley).